Here is a 95-residue protein sequence, read N- to C-terminus: Mammaglobin-B (95 aa).

Residues 1-18 form the signal peptide; that stretch reads MKLLMVLMLAALLLHCYA. N68 is a glycosylation site (N-linked (GlcNAc...) asparagine).

As to quaternary structure, heterodimer of a lipophilin A and a lipophilin C (mammaglobin B) monomer associated head to head. Expressed in thymus, trachea, kidney, steroid responsive tissues (prostate, testis, uterus, breast and ovary) and salivary gland.

Its subcellular location is the secreted. Functionally, may bind androgens and other steroids, may also bind estramustine, a chemotherapeutic agent used for prostate cancer. May be under transcriptional regulation of steroid hormones. This Homo sapiens (Human) protein is Mammaglobin-B (SCGB2A1).